Here is a 256-residue protein sequence, read N- to C-terminus: Adenylate kinase (256 aa).

An ATP-binding site is contributed by 49-54 (GAGKGT). Residues 69 to 98 (ATGDMLREQVQQKTPLGIEAKKIMDAGGLV) are NMP. AMP-binding positions include threonine 70, arginine 75, 96–98 (GLV), 125–128 (GFPR), and glutamine 132. Positions 166-203 (GRLVHPASGRSYHKEFNPPKKRNVDDVTGEPLIQRSDD) are LID. Residues arginine 167 and 176–177 (SY) each bind ATP. AMP is bound by residues arginine 200 and arginine 211. ATP is bound at residue glutamine 239.

The protein belongs to the adenylate kinase family. AK2 subfamily. As to quaternary structure, monomer.

Its subcellular location is the cytoplasm. The protein localises to the cytosol. It is found in the mitochondrion intermembrane space. The catalysed reaction is AMP + ATP = 2 ADP. Its function is as follows. Catalyzes the reversible transfer of the terminal phosphate group between ATP and AMP. Plays an important role in cellular energy homeostasis and in adenine nucleotide metabolism. Adenylate kinase activity is critical for regulation of the phosphate utilization and the AMP de novo biosynthesis pathways. In Laccaria bicolor (strain S238N-H82 / ATCC MYA-4686) (Bicoloured deceiver), this protein is Adenylate kinase.